Reading from the N-terminus, the 332-residue chain is Melanocortin receptor 4 (332 aa).

Over 1 to 43 the chain is Extracellular; the sequence is MNSTQPLGMHTSLHSWNRSAHGMPTNVSESLAKGYSDGGCYEQ. N-linked (GlcNAc...) asparagine glycosylation is found at Asn2, Asn17, and Asn26. Intrachain disulfides connect Cys40–Cys279 and Cys271–Cys277. The chain crosses the membrane as a helical span at residues 44–69; it reads LFVSPEVFVTLGVISLLENILVIVAI. Over 70–81 the chain is Cytoplasmic; that stretch reads AKNKNLHSPMYF. The chain crosses the membrane as a helical span at residues 82–106; sequence FICSLAVADMLVSVSNGSETIVITL. Positions 100, 122, and 126 each coordinate Ca(2+). Residues 107–123 lie on the Extracellular side of the membrane; the sequence is LNSTDTDAQSFTVDIDN. A helical membrane pass occupies residues 124 to 145; the sequence is VIDSVICSSLLASICSLLSIAV. Residues 146 to 165 lie on the Cytoplasmic side of the membrane; the sequence is DRYFTIFYALQYHNIMTVKR. A helical membrane pass occupies residues 166 to 186; it reads VAITISAIWAACTVSGVLFII. The Extracellular segment spans residues 187-191; that stretch reads YSDSS. A helical membrane pass occupies residues 192–215; that stretch reads AVIICLITVFFTMLALMASLYVHM. At 216–248 the chain is on the cytoplasmic side; it reads FLMARLHIKRIAVLPGSGTIRQGANMKGAITLT. A helical membrane pass occupies residues 249–271; the sequence is ILIGVFVVCWAPFFLHLIFYISC. The Extracellular portion of the chain corresponds to 272-280; that stretch reads PQNPYCVCF. A helical transmembrane segment spans residues 281 to 304; sequence MSHFNLYLILIMCNSIIDPLIYAL. The Cytoplasmic portion of the chain corresponds to 305-332; the sequence is RSQELRKTFKEIICCSPLGGLCDLSSRY. The S-palmitoyl cysteine moiety is linked to residue Cys318.

The protein belongs to the G-protein coupled receptor 1 family. In terms of assembly, homodimer; disulfide-linked, also forms higher order oligomers. Interacts with GNAS. Interacts with ATRNL1. Interacts with MGRN1; this interaction competes with GNAS-binding and thus inhibits agonist-induced cAMP production. Interacts with MRAP and MRAP2; these associated factors increase ligand-sensitivity and generation of cAMP.

It is found in the cell membrane. Hormone receptor that acts as a key component of the leptin-melanocortin pathway at the intersection of homeostatic maintenance of energetic state. Plays a role in regulating food intake: activation by a stimulating hormone such as anorexigenic alpha-melanocyte stimulating hormone (alpha-MSH) inhibits appetite, whereas binding to a natural antagonist like Agouti-related protein/AGRP promotes appetite. G-protein-coupled receptor that activates conventional Galphas signaling leading to induction of anorexogenic signaling in the hypothalamus to result in negative energy balance. Regulates the firing activity of neurons from the hypothalamus by alpha-MSH and AGRP independently of Galphas signaling by ligand-induced coupling of closure of inwardly rectifying potassium channel KCNJ13. In intestinal epithelial cells, plays a role in the inhibition of hepatic glucose production via nesfatin-1/NUCB2 leading to increased cyclic adenosine monophosphate (cAMP) levels and glucagon-like peptide 1 (GLP-1) secretion in the intestinal epithelium. This is Melanocortin receptor 4 (MC4R) from Bos taurus (Bovine).